The primary structure comprises 78 residues: DNA-directed RNA polymerase subunit Rpo5 (78 aa).

Belongs to the archaeal Rpo5/eukaryotic RPB5 RNA polymerase subunit family. As to quaternary structure, part of the RNA polymerase complex.

Its subcellular location is the cytoplasm. The catalysed reaction is RNA(n) + a ribonucleoside 5'-triphosphate = RNA(n+1) + diphosphate. Functionally, DNA-dependent RNA polymerase (RNAP) catalyzes the transcription of DNA into RNA using the four ribonucleoside triphosphates as substrates. The sequence is that of DNA-directed RNA polymerase subunit Rpo5 from Methanococcus vannielii (strain ATCC 35089 / DSM 1224 / JCM 13029 / OCM 148 / SB).